The primary structure comprises 480 residues: UDP-N-acetylmuramate--L-alanine ligase (480 aa).

Gly122–Thr128 lines the ATP pocket.

The protein belongs to the MurCDEF family.

The protein localises to the cytoplasm. The enzyme catalyses UDP-N-acetyl-alpha-D-muramate + L-alanine + ATP = UDP-N-acetyl-alpha-D-muramoyl-L-alanine + ADP + phosphate + H(+). It participates in cell wall biogenesis; peptidoglycan biosynthesis. Functionally, cell wall formation. The sequence is that of UDP-N-acetylmuramate--L-alanine ligase from Pseudomonas paraeruginosa (strain DSM 24068 / PA7) (Pseudomonas aeruginosa (strain PA7)).